Here is a 612-residue protein sequence, read N- to C-terminus: uncharacterized protein (612 aa).

Positions 39–100 form a coiled coil; it reads ERDHNLWEIE…KNISVKDLDE (62 aa). The interval 219-241 is disordered; the sequence is PLSSGESLPKKEEEVTKSPSFTL. 7 WD repeats span residues 286 to 325, 337 to 376, 389 to 432, 434 to 470, 483 to 523, 526 to 565, and 574 to 612; these read TSTQ…NDNS, GHEG…TSDS, GHED…FKIR, DSKQ…LVSQ, AVKD…LLAE, ISKV…STLE, and EEIT…KYLP.

Its subcellular location is the cytoplasm. This is an uncharacterized protein from Schizosaccharomyces pombe (strain 972 / ATCC 24843) (Fission yeast).